Here is a 302-residue protein sequence, read N- to C-terminus: MSSPELPSQMGVPNGHTKLQEVTPDTPLDEVFQKWEEDGGVIIKGILAPAQVTQLREELQPLLDTFQRGSTTDIEPLKRFHGSQTKRAGGLTNCSAIFRDYLLDNDFLHAIAARCFGSGGRPGVHAYWISSANTINVGPGQPAQVLHRDLGNYPHYHLLGPDGPESQATFLIATTDFTDANGATRIIPGSQKWPFNQTWNPSQSIPSEMHAGDCLLFGGKVVHGTGANTTNAERGCVAFTFCANHLTPEEAHPHIVDINIVRKLSERAQRSLGFRSQYPRGAPGLWMEGYNEVATRLGLDSK.

Residues 1–22 (MSSPELPSQMGVPNGHTKLQEV) are disordered. Residues His-147, Asp-149, and His-223 each contribute to the Fe cation site.

The protein belongs to the PhyH family. In terms of assembly, homodimer. It depends on Fe cation as a cofactor.

It participates in mycotoxin biosynthesis. Functionally, dioxygenase; part of the gene cluster that mediates the biosynthesis of the host-selective toxins (HSTs) AAL-toxins, sphinganine-analog mycotoxins responsible for Alternaria stem canker on tomato by the tomato pathotype. The biosynthesis starts with the polyketide synthase ALT1-catalyzed C-16 carbon chain assembly from one starter acetyl-CoA unit with malonyl-CoA extender units. ALT1 also selectively transfers methyl groups at the first and the third cycle of chain elongation for AAL toxin. The C-16 polyketide chain is released from the enzyme by a nucleophilic attack of a carbanion, which is derived from R-carbon of glycin by decarboxylation, on the carbonyl carbon of polyketide acyl chain. This step is probably catalyzed by a pyridoxal 5'-phosphate-dependent aminoacyl transferase ALT4. The respective functions of the other enzymes encoded by the cluster have still to be elucidated. The sphingosine N-acyltransferase-like protein ALT7 seems not to act as a resistance/self-tolerance factor against the toxin in the toxin biosynthetic gene cluster, contrary to what is expected. This Alternaria alternata (Alternaria rot fungus) protein is Dioxygenase ALT11.